The sequence spans 333 residues: Holliday junction branch migration complex subunit RuvB (333 aa).

Positions 1 to 182 are large ATPase domain (RuvB-L); that stretch reads MDERLLSGES…FGVLSRLEYY (182 aa). ATP-binding positions include leucine 21, arginine 22, glycine 63, lysine 66, threonine 67, threonine 68, 129-131, arginine 172, tyrosine 182, and arginine 219; that span reads EDF. Residue threonine 67 coordinates Mg(2+). The interval 183–253 is small ATPAse domain (RuvB-S); it reads TVDQLSAIVE…ITQMALELLQ (71 aa). Positions 256–333 are head domain (RuvB-H); it reads KLGLDHIDHK…EHFGMEMPKV (78 aa). Arginine 311 and arginine 316 together coordinate DNA.

The protein belongs to the RuvB family. In terms of assembly, homohexamer. Forms an RuvA(8)-RuvB(12)-Holliday junction (HJ) complex. HJ DNA is sandwiched between 2 RuvA tetramers; dsDNA enters through RuvA and exits via RuvB. An RuvB hexamer assembles on each DNA strand where it exits the tetramer. Each RuvB hexamer is contacted by two RuvA subunits (via domain III) on 2 adjacent RuvB subunits; this complex drives branch migration. In the full resolvosome a probable DNA-RuvA(4)-RuvB(12)-RuvC(2) complex forms which resolves the HJ.

Its subcellular location is the cytoplasm. It catalyses the reaction ATP + H2O = ADP + phosphate + H(+). In terms of biological role, the RuvA-RuvB-RuvC complex processes Holliday junction (HJ) DNA during genetic recombination and DNA repair, while the RuvA-RuvB complex plays an important role in the rescue of blocked DNA replication forks via replication fork reversal (RFR). RuvA specifically binds to HJ cruciform DNA, conferring on it an open structure. The RuvB hexamer acts as an ATP-dependent pump, pulling dsDNA into and through the RuvAB complex. RuvB forms 2 homohexamers on either side of HJ DNA bound by 1 or 2 RuvA tetramers; 4 subunits per hexamer contact DNA at a time. Coordinated motions by a converter formed by DNA-disengaged RuvB subunits stimulates ATP hydrolysis and nucleotide exchange. Immobilization of the converter enables RuvB to convert the ATP-contained energy into a lever motion, pulling 2 nucleotides of DNA out of the RuvA tetramer per ATP hydrolyzed, thus driving DNA branch migration. The RuvB motors rotate together with the DNA substrate, which together with the progressing nucleotide cycle form the mechanistic basis for DNA recombination by continuous HJ branch migration. Branch migration allows RuvC to scan DNA until it finds its consensus sequence, where it cleaves and resolves cruciform DNA. The sequence is that of Holliday junction branch migration complex subunit RuvB from Bacillus cereus (strain Q1).